The sequence spans 1133 residues: Nuclear pore complex-interacting protein family member B5 (1133 aa).

Residues 60–84 form a helical membrane-spanning segment; sequence WLHVIIAFPTSYKVVITLWIVYLWV. 3 disordered regions span residues 241–262, 290–575, and 868–1133; these read NRMGHQPPPPTQQHSITDNSLS, LTPL…IKTP, and ERLR…RRLS. Residues 252–262 show a composition bias toward polar residues; sequence QQHSITDNSLS. Residues 349-359 are compositionally biased toward pro residues; that stretch reads PLPPSALPSAP. Basic and acidic residues-rich tracts occupy residues 406-416, 448-458, 490-500, 528-538, 903-913, 945-955, and 987-997; these read DNIKTPAERLR.

This sequence belongs to the NPIP family.

Its subcellular location is the membrane. The sequence is that of Nuclear pore complex-interacting protein family member B5 (NPIPB5) from Homo sapiens (Human).